A 309-amino-acid chain; its full sequence is Diadenylate cyclase (309 aa).

In terms of domain architecture, DAC spans 144–301 (TITLYELFET…DGKIVFETDP (158 aa)).

It belongs to the adenylate cyclase family. DacZ subfamily. Requires Mn(2+) as cofactor.

The enzyme catalyses 2 ATP = 3',3'-c-di-AMP + 2 diphosphate. Its function is as follows. Diadenylate cyclase that catalyzes the condensation of 2 ATP molecules into cyclic di-AMP (c-di-AMP). c-di-AMP is a second messenger for intracellular signal transduction involved in the control of important regulatory processes such as osmoregulation. The sequence is that of Diadenylate cyclase from Methanocaldococcus jannaschii (strain ATCC 43067 / DSM 2661 / JAL-1 / JCM 10045 / NBRC 100440) (Methanococcus jannaschii).